The following is a 286-amino-acid chain: ATP synthase gamma chain (286 aa).

Belongs to the ATPase gamma chain family. In terms of assembly, F-type ATPases have 2 components, CF(1) - the catalytic core - and CF(0) - the membrane proton channel. CF(1) has five subunits: alpha(3), beta(3), gamma(1), delta(1), epsilon(1). CF(0) has three main subunits: a, b and c.

It is found in the cell inner membrane. Its function is as follows. Produces ATP from ADP in the presence of a proton gradient across the membrane. The gamma chain is believed to be important in regulating ATPase activity and the flow of protons through the CF(0) complex. This chain is ATP synthase gamma chain, found in Shewanella piezotolerans (strain WP3 / JCM 13877).